Reading from the N-terminus, the 390-residue chain is Succinate--CoA ligase [ADP-forming] subunit beta (390 aa).

Residues 9-248 form the ATP-grasp domain; that stretch reads KEILRRHKAN…ITEEDPLEVQ (240 aa). ATP contacts are provided by residues Lys-50, 57 to 59, Glu-103, Ile-106, and Glu-111; that span reads GRG. Positions 203 and 217 each coordinate Mg(2+). Residues Asn-268 and 325–327 each bind substrate; that span reads GIV.

It belongs to the succinate/malate CoA ligase beta subunit family. In terms of assembly, heterotetramer of two alpha and two beta subunits. Mg(2+) serves as cofactor.

The enzyme catalyses succinate + ATP + CoA = succinyl-CoA + ADP + phosphate. The catalysed reaction is GTP + succinate + CoA = succinyl-CoA + GDP + phosphate. It functions in the pathway carbohydrate metabolism; tricarboxylic acid cycle; succinate from succinyl-CoA (ligase route): step 1/1. In terms of biological role, succinyl-CoA synthetase functions in the citric acid cycle (TCA), coupling the hydrolysis of succinyl-CoA to the synthesis of either ATP or GTP and thus represents the only step of substrate-level phosphorylation in the TCA. The beta subunit provides nucleotide specificity of the enzyme and binds the substrate succinate, while the binding sites for coenzyme A and phosphate are found in the alpha subunit. The polypeptide is Succinate--CoA ligase [ADP-forming] subunit beta (Leptospira borgpetersenii serovar Hardjo-bovis (strain JB197)).